The primary structure comprises 873 residues: MKSSEIRQKFLQFFQSKGHSIVPSSSLVPGNDPTLLFTNSGMVQFKDVFTGKEKRPYTRATSSQRSVRAGGKHNDLENVGYTARHHTFFEMLGNFSFGDYFKQDAIRFAWELLTTVYKLPVEKLWVTVYQEDDEAYDIWAKEVGVPTERIIRIGDNKGARYASDNFWQMGDTGPCGPCTEIFYDHGPDIWGGPPGSPEEDGDRYIEIWNLVFMQFERDAAGNMTPLPKPCVDTGMGLERIAAVLQGVHSNYEIDLFQKLITAAARETGVQDLHDNSLKVIADHIRACSFLIVDGVIPSNEGRGYVLRRIVRRALRHGYKLGQTKPFFYRLVPDLVAQMGEAYPELANMAERVGQVLKQEEERFGETLEHGMKILDVALAQVPKGGLLDGNTLFTLYDTYGFPVDLTADICREREVEIDMAGFEAAMERQRDQARAAGKFKMAEGLNYEGAQTRFEGYEQLELSGAKVTALYVDGTQTDQVRAGQQAVVVLDATPFYAESGGQVGDTGLLVADGLRFAVADTLKVQAGVFGHHGLLEEGVLKVGDTLLARVDAVRRARTVRNHSATHLMHKALREVLGAHVQQRGSLVDPDKTRFDFAHDAPMTAEQIARVEAIVNAEVLANQAAQARVMAYDDAVKGGAMALFGEKYGDTVRVLDIGFSRELCGGTHVSRTGDIGLFKIVSEGGVAAGVRRVEAITGDNALVWVQEQNALLQRAAGVLRSPVAELPERIAQVQDQVKALEKDLEQARAKLAASAGNDLADKSAVEIKGVKVLAAVINDVDPKALRGMVDNLKDKLKPAIVLLAASADGKISLVGGVTADQTAKVKAGDLVGFVAAQVGGKGGGRPDMAMGGGTDVAALPAAIASVQDWVNERL.

Positions 562, 566, 663, and 667 each coordinate Zn(2+).

Belongs to the class-II aminoacyl-tRNA synthetase family. Zn(2+) serves as cofactor.

The protein resides in the cytoplasm. It catalyses the reaction tRNA(Ala) + L-alanine + ATP = L-alanyl-tRNA(Ala) + AMP + diphosphate. Catalyzes the attachment of alanine to tRNA(Ala) in a two-step reaction: alanine is first activated by ATP to form Ala-AMP and then transferred to the acceptor end of tRNA(Ala). Also edits incorrectly charged Ser-tRNA(Ala) and Gly-tRNA(Ala) via its editing domain. This chain is Alanine--tRNA ligase, found in Bordetella avium (strain 197N).